The chain runs to 915 residues: DNA (cytosine-5)-methyltransferase 3 (915 aa).

Over residues 1–14 (MAPSSPSSARPTRA) the composition is skewed to low complexity. 2 disordered regions span residues 1-107 (MAPS…AEEQ) and 152-171 (HSNW…PEED). Basic and acidic residues predominate over residues 21–30 (AMAEEIHQNQ). Residues 42-57 (AKRRRKAASSGKKPKP) show a composition bias toward basic residues. Residues 71-80 (KKGETEKTEP) show a composition bias toward basic and acidic residues. Over residues 81 to 107 (VVDDVCAEEPDEEELAMGEEEAEAEEQ) the composition is skewed to acidic residues. Residues 188–313 (IVYCLGDDVY…VAYSTFANIS (126 aa)) enclose the BAH domain. Residues 315 to 328 (ENGQSGSETASGIS) are compositionally biased toward polar residues. Positions 315 to 338 (ENGQSGSETASGISSDDAGLETSS) are disordered. One can recognise an SAM-dependent MTase C5-type domain in the interval 345-876 (ATLLDLYSGC…YCLGQAYLGE (532 aa)). Residues 445–508 (FVVQKLIGIR…EGRKRKILPL (64 aa)) form the Chromo domain. Residue Cys521 is part of the active site.

This sequence belongs to the class I-like SAM-binding methyltransferase superfamily. C5-methyltransferase family.

The protein localises to the nucleus. It catalyses the reaction a 2'-deoxycytidine in DNA + S-adenosyl-L-methionine = a 5-methyl-2'-deoxycytidine in DNA + S-adenosyl-L-homocysteine + H(+). In terms of biological role, may be involved in the CpXpG methylation and in gene silencing. The sequence is that of DNA (cytosine-5)-methyltransferase 3 (DMT105) from Zea mays (Maize).